Here is a 338-residue protein sequence, read N- to C-terminus: Activator of 90 kDa heat shock protein ATPase homolog 1 (338 aa).

Lys3 is modified (N6-acetyllysine). A Glycyl lysine isopeptide (Lys-Gly) (interchain with G-Cter in SUMO1) cross-link involves residue Lys182. The residue at position 193 (Ser193) is a Phosphoserine. Lys203 is covalently cross-linked (Glycyl lysine isopeptide (Lys-Gly) (interchain with G-Cter in SUMO2)). Lys212 carries the N6-acetyllysine modification. Residue Tyr223 is modified to Phosphotyrosine; by ABL.

The protein belongs to the AHA1 family. As to quaternary structure, interacts with HSPCA/HSP90. Interacts with HSP90AA1; the interaction activates HSP90AA1 ATPase activity. Interacts with HSP90AB1. Interacts with GCH1. Interacts with SRPK1. Interacts with FLCN. In terms of processing, phosphorylation at Tyr-223 enhances binding to chaperone HSP90AA1.

Its subcellular location is the cytoplasm. The protein resides in the cytosol. It localises to the endoplasmic reticulum. Functionally, acts as a co-chaperone of HSP90AA1. Activates the ATPase activity of HSP90AA1 leading to increase in its chaperone activity. Competes with the inhibitory co-chaperone FNIP1 for binding to HSP90AA1, thereby providing a reciprocal regulatory mechanism for chaperoning of client proteins. Competes with the inhibitory co-chaperone TSC1 for binding to HSP90AA1, thereby providing a reciprocal regulatory mechanism for chaperoning of client proteins. The protein is Activator of 90 kDa heat shock protein ATPase homolog 1 (Ahsa1) of Mus musculus (Mouse).